Consider the following 256-residue polypeptide: Triosephosphate isomerase (256 aa).

N9–K11 contributes to the substrate binding site. H95 (electrophile) is an active-site residue. The active-site Proton acceptor is E167. Residues G173, S213, and G234–G235 contribute to the substrate site.

This sequence belongs to the triosephosphate isomerase family. In terms of assembly, homodimer.

The protein localises to the cytoplasm. It catalyses the reaction D-glyceraldehyde 3-phosphate = dihydroxyacetone phosphate. It functions in the pathway carbohydrate biosynthesis; gluconeogenesis. Its pathway is carbohydrate degradation; glycolysis; D-glyceraldehyde 3-phosphate from glycerone phosphate: step 1/1. Involved in the gluconeogenesis. Catalyzes stereospecifically the conversion of dihydroxyacetone phosphate (DHAP) to D-glyceraldehyde-3-phosphate (G3P). The chain is Triosephosphate isomerase from Symbiobacterium thermophilum (strain DSM 24528 / JCM 14929 / IAM 14863 / T).